A 112-amino-acid polypeptide reads, in one-letter code: UPF0145 protein RB3016 (112 aa).

It belongs to the UPF0145 family.

This chain is UPF0145 protein RB3016, found in Rhodopirellula baltica (strain DSM 10527 / NCIMB 13988 / SH1).